A 281-amino-acid polypeptide reads, in one-letter code: Very long chain fatty acid elongase 7 (281 aa).

Residue Ala-2 is modified to N-acetylalanine. The Lumenal portion of the chain corresponds to 2 to 27 (AFSDLTSRTVRFYDNWIKDADPRVEN). A helical membrane pass occupies residues 28–48 (WLLMSSPLPQTIILGLYVYFV). Over 49–72 (TSLGPKLMENRKPFELKKAMITYN) the chain is Cytoplasmic. Residues 73 to 93 (FFIVLFSVYMCYEFVMSGWGT) traverse the membrane as a helical segment. Topologically, residues 94-115 (GYSFRCDIVDYSQSPRAMRMVH) are lumenal. A disulfide bond links Cys-99 and Cys-231. The chain crosses the membrane as a helical span at residues 116–136 (TCWLYYFSKFIELFDTIFFVL). 3-oxoeicosanoyl-CoA-binding residues include Lys-124, Arg-137, Lys-139, Gln-142, and His-147. Over 137-142 (RKKNSQ) the chain is Cytoplasmic. The chain crosses the membrane as a helical span at residues 143-162 (VTFLHVFHHTIMPWTWWFGV). The HxxHH motif signature appears at 147-151 (HVFHH). His-150 serves as the catalytic Nucleophile. Over 163–176 (KFAAGGLGTFHALL) the chain is Lumenal. Residues 177–197 (NTAVHVVMYFYYGLCAMGPAY) traverse the membrane as a helical segment. 3-oxoeicosanoyl-CoA is bound by residues Tyr-187, Lys-204, Thr-208, and Gln-211. The Cytoplasmic portion of the chain corresponds to 198–206 (QKYLWWKKH). The chain crosses the membrane as a helical span at residues 207–227 (LTSLQLVQFVLVTVHIGQIFF). The Lumenal portion of the chain corresponds to 228-236 (MEDCNYQYP). Residues 237-257 (VFLYIIMSYGCIFLLLFLHFW) traverse the membrane as a helical segment. Topologically, residues 258-281 (YRAYTKGQRLPKTMENGNCKSKHH) are cytoplasmic. Arg-266 contacts 3-oxoeicosanoyl-CoA. The short motif at 277–281 (KSKHH) is the Di-lysine motif element.

This sequence belongs to the ELO family. ELOVL7 subfamily. As to quaternary structure, homodimer. Interacts with TECR.

The protein resides in the endoplasmic reticulum membrane. It carries out the reaction a very-long-chain acyl-CoA + malonyl-CoA + H(+) = a very-long-chain 3-oxoacyl-CoA + CO2 + CoA. The enzyme catalyses eicosanoyl-CoA + malonyl-CoA + H(+) = 3-oxodocosanoyl-CoA + CO2 + CoA. It catalyses the reaction (5Z,8Z,11Z,14Z)-eicosatetraenoyl-CoA + malonyl-CoA + H(+) = (7Z,10Z,13Z,16Z)-3-oxodocosatetraenoyl-CoA + CO2 + CoA. The catalysed reaction is (6Z,9Z,12Z)-octadecatrienoyl-CoA + malonyl-CoA + H(+) = (8Z,11Z,14Z)-3-oxoeicosatrienoyl-CoA + CO2 + CoA. It carries out the reaction (9Z,12Z)-octadecadienoyl-CoA + malonyl-CoA + H(+) = (11Z,14Z)-3-oxoicosa-11,14-dienoyl-CoA + CO2 + CoA. The enzyme catalyses (9Z)-octadecenoyl-CoA + malonyl-CoA + H(+) = 3-oxo-(11Z)-eicosenoyl-CoA + CO2 + CoA. It catalyses the reaction octadecanoyl-CoA + malonyl-CoA + H(+) = 3-oxoeicosanoyl-CoA + CO2 + CoA. The catalysed reaction is hexadecanoyl-CoA + malonyl-CoA + H(+) = 3-oxooctadecanoyl-CoA + CO2 + CoA. It carries out the reaction (9Z,12Z,15Z)-octadecatrienoyl-CoA + malonyl-CoA + H(+) = (11Z,14Z,17Z)-3-oxoeicosatrienoyl-CoA + CO2 + CoA. It participates in lipid metabolism; fatty acid biosynthesis. In terms of biological role, catalyzes the first and rate-limiting reaction of the four reactions that constitute the long-chain fatty acids elongation cycle. This endoplasmic reticulum-bound enzymatic process allows the addition of 2 carbons to the chain of long- and very long-chain fatty acids (VLCFAs) per cycle. Condensing enzyme with higher activity toward C18 acyl-CoAs, especially C18:3(n-3) acyl-CoAs and C18:3(n-6)-CoAs. Also active toward C20:4-, C18:0-, C18:1-, C18:2- and C16:0-CoAs, and weakly toward C20:0-CoA. Little or no activity toward C22:0-, C24:0-, or C26:0-CoAs. May participate in the production of saturated and polyunsaturated VLCFAs of different chain lengths that are involved in multiple biological processes as precursors of membrane lipids and lipid mediators. This is Very long chain fatty acid elongase 7 from Rattus norvegicus (Rat).